The chain runs to 309 residues: Golgi-associated RAB2 interactor protein 1A (309 aa).

A phosphoserine mark is found at Ser-231, Ser-263, and Ser-267.

The protein belongs to the GARIN family. As to quaternary structure, interacts (via N-terminus) with RAB2B (in GTP-bound form).

The protein localises to the golgi apparatus. Functionally, RAB2B effector protein required for accurate acrosome formation and normal male fertility. This is Golgi-associated RAB2 interactor protein 1A from Homo sapiens (Human).